A 1264-amino-acid polypeptide reads, in one-letter code: TBC1 domain family member 9 (1264 aa).

2 consecutive GRAM domains span residues 146 to 213 (VKFH…EKNA) and 293 to 361 (ERYR…EKAD). Residues 410 to 456 (KEFSGSCNSSDDEVYSRPSSLVSSSPQRSTSSDADGERPFNLNGNSV) form a disordered region. The segment covering 425–441 (SRPSSLVSSSPQRSTSS) has biased composition (low complexity). The 188-residue stretch at 515 to 702 (GIPESMRGEL…VVVDCFFYEG (188 aa)) folds into the Rab-GAP TBC domain. The EF-hand domain occupies 886 to 921 (HSDVLASRLFQLLDENGDSLINFREFVSGLSAACHG). Basic and acidic residues predominate over residues 1119-1138 (SEEHSLGGQMEDIKLEDSSP). The interval 1119–1162 (SEEHSLGGQMEDIKLEDSSPRDNGACSSMLISDDDTKDDSSMSS) is disordered.

In terms of biological role, may act as a GTPase-activating protein for Rab family protein(s). The polypeptide is TBC1 domain family member 9 (Tbc1d9) (Mus musculus (Mouse)).